A 290-amino-acid polypeptide reads, in one-letter code: Ubiquinone biosynthesis protein COQ4, mitochondrial (290 aa).

The transit peptide at 1–32 directs the protein to the mitochondrion; that stretch reads MAKRVCVGDLRKLAGSVSTPSRCILPPHARCF. Zn(2+) contacts are provided by His-168, Asp-169, His-172, and Glu-184. Residues 260–290 are disordered; sequence KPPDLREMRKAEREAQKKDKEAKETMTRAAV.

Belongs to the COQ4 family. As to quaternary structure, component of a multi-subunit COQ enzyme complex, composed of at least COQ3, COQ4, COQ5, COQ6, COQ7 and COQ9. Zn(2+) serves as cofactor.

The protein localises to the mitochondrion inner membrane. The enzyme catalyses a 4-hydroxy-3-methoxy-5-(all-trans-polyprenyl)benzoate + H(+) = a 2-methoxy-6-(all-trans-polyprenyl)phenol + CO2. It functions in the pathway cofactor biosynthesis; ubiquinone biosynthesis. In terms of biological role, lyase that catalyzes the C1-decarboxylation of 4-hydroxy-3-methoxy-5-(all-trans-polyprenyl)benzoic acid into 2-methoxy-6-(all-trans-polyprenyl)phenol during ubiquinone biosynthesis. This is Ubiquinone biosynthesis protein COQ4, mitochondrial from Phaeosphaeria nodorum (strain SN15 / ATCC MYA-4574 / FGSC 10173) (Glume blotch fungus).